The sequence spans 187 residues: MAERENRRDRRDDRSREETPEFADRLVAINRVSKTVKGGKRFGFAALVVVGDQRGRVGFGKGKAKEVPEAIRKATEQAKRQMIRVALRDGRTLHHDQEGRHGAGKVVMRAAVPGTGIIAGGPMRAVFEMLGIQDVVAKSMGSQNPYNMIRATMDGLKRESSPRQVAQRRGKKVAEILKKPEAEVAEA.

The tract at residues 1–20 is disordered; the sequence is MAERENRRDRRDDRSREETP. One can recognise an S5 DRBM domain in the interval 22–85; sequence FADRLVAINR…EQAKRQMIRV (64 aa). Residues 154-174 form a disordered region; sequence DGLKRESSPRQVAQRRGKKVA.

It belongs to the universal ribosomal protein uS5 family. Part of the 30S ribosomal subunit. Contacts proteins S4 and S8.

In terms of biological role, with S4 and S12 plays an important role in translational accuracy. Functionally, located at the back of the 30S subunit body where it stabilizes the conformation of the head with respect to the body. This is Small ribosomal subunit protein uS5 from Cereibacter sphaeroides (strain ATCC 17025 / ATH 2.4.3) (Rhodobacter sphaeroides).